The sequence spans 347 residues: GMP reductase (347 aa).

Residue 108-131 (ADFQKTKDIMALTDDLIFICVDIA) coordinates NADP(+). 2 residues coordinate K(+): Gly181 and Gly183. The active-site Thioimidate intermediate is Cys186. Residue 216-239 (IIGDGGCSCAGDVSKAFGGGADFV) coordinates NADP(+).

Belongs to the IMPDH/GMPR family. GuaC type 1 subfamily. In terms of assembly, homotetramer.

The enzyme catalyses IMP + NH4(+) + NADP(+) = GMP + NADPH + 2 H(+). Catalyzes the irreversible NADPH-dependent deamination of GMP to IMP. It functions in the conversion of nucleobase, nucleoside and nucleotide derivatives of G to A nucleotides, and in maintaining the intracellular balance of A and G nucleotides. This Aliivibrio salmonicida (strain LFI1238) (Vibrio salmonicida (strain LFI1238)) protein is GMP reductase.